Here is a 312-residue protein sequence, read N- to C-terminus: Tetraspanin-17 (312 aa).

The next 4 helical transmembrane spans lie at 17–37, 64–84, 89–109, and 274–294; these read IFSIYYWLSALGHVFLGLWML, VSLVCGCAQLLVGFLGLCGAV, FLLLAFVMFLIGTFLADVAMG, and IWIFVGFGFGSALTMMLGICL.

Belongs to the tetraspanin (TM4SF) family. Expressed in dopaminergic neurons, head muscles, vulva and spermatheca.

It localises to the cell membrane. The protein resides in the cell projection. It is found in the dendrite. Its subcellular location is the axon. Protects dopaminergic neurons against oxidative stress-induced neurodegeneration. May act partly via dopamine receptor dop-2 to negatively regulate dopamine reuptake transporter dat-1 activity. Also plays a role in modulating behaviors linked to dopamine signaling. Confers protection against oxidative stress in the whole body. This is Tetraspanin-17 from Caenorhabditis elegans.